Consider the following 155-residue polypeptide: Probable cyclic pyranopterin monophosphate synthase (155 aa).

Substrate-binding positions include 74-76 and 110-111; these read MCH and ME. Asp-125 is a catalytic residue.

This sequence belongs to the MoaC family. As to quaternary structure, homohexamer; trimer of dimers.

The enzyme catalyses (8S)-3',8-cyclo-7,8-dihydroguanosine 5'-triphosphate = cyclic pyranopterin phosphate + diphosphate. It participates in cofactor biosynthesis; molybdopterin biosynthesis. Its function is as follows. Catalyzes the conversion of (8S)-3',8-cyclo-7,8-dihydroguanosine 5'-triphosphate to cyclic pyranopterin monophosphate (cPMP). The protein is Probable cyclic pyranopterin monophosphate synthase of Methanoregula boonei (strain DSM 21154 / JCM 14090 / 6A8).